Here is a 1894-residue protein sequence, read N- to C-terminus: Plexin-A4 (1894 aa).

The signal sequence occupies residues 1 to 23; sequence MKAMPWNWTCLLSHLLMVGMGSS. The 484-residue stretch at 24 to 507 folds into the Sema domain; the sequence is TLLTRQPAPL…SERQLTRVPV (484 aa). Over 24–1237 the chain is Extracellular; sequence TLLTRQPAPL…IAPDSPLSLP (1214 aa). Intrachain disulfides connect Cys-95/Cys-104, Cys-130/Cys-138, Cys-284/Cys-405, Cys-300/Cys-356, Cys-374/Cys-393, Cys-510/Cys-527, Cys-516/Cys-558, Cys-519/Cys-536, Cys-530/Cys-542, and Cys-593/Cys-612. In terms of domain architecture, PSI 1 spans 509–559; it reads SCGQYQSCGECLGSGDPHCGWCVLHNTCTRKERCERSKEPRRFASEMKQCV. Asn-655 carries N-linked (GlcNAc...) asparagine glycosylation. 2 consecutive PSI domains span residues 655–702 and 803–856; these read NCSV…EDCP and KCGA…SKCT. 4 IPT/TIG domains span residues 858–952, 954–1037, 1040–1139, and 1142–1230; these read PRIT…YYFM, LTLS…FQYV, PTIV…FTYY, and PVFE…YIAP. Residues Asn-1007, Asn-1132, and Asn-1180 are each glycosylated (N-linked (GlcNAc...) asparagine). The chain crosses the membrane as a helical span at residues 1238-1258; that stretch reads AIVSIAVAGGLLIIFIVAVLI. Residues 1259 to 1894 are Cytoplasmic-facing; it reads AYKRKSRESD…QVITLMSLDS (636 aa). Residue Lys-1350 is modified to N6-acetyllysine.

Belongs to the plexin family. In terms of assembly, interacts with NRP1 and NRP2.

It localises to the cell membrane. Coreceptor for SEMA3A. Necessary for signaling by class 3 semaphorins and subsequent remodeling of the cytoskeleton. Plays a role in axon guidance in the developing nervous system. Class 3 semaphorins bind to a complex composed of a neuropilin and a plexin. The plexin modulates the affinity of the complex for specific semaphorins, and its cytoplasmic domain is required for the activation of down-stream signaling events in the cytoplasm. The polypeptide is Plexin-A4 (PLXNA4) (Homo sapiens (Human)).